The primary structure comprises 110 residues: Ribonuclease P protein component 1 (110 aa).

It belongs to the eukaryotic/archaeal RNase P protein component 1 family. Consists of a catalytic RNA component and at least 4-5 protein subunits.

It is found in the cytoplasm. The enzyme catalyses Endonucleolytic cleavage of RNA, removing 5'-extranucleotides from tRNA precursor.. In terms of biological role, part of ribonuclease P, a protein complex that generates mature tRNA molecules by cleaving their 5'-ends. The chain is Ribonuclease P protein component 1 from Aeropyrum pernix (strain ATCC 700893 / DSM 11879 / JCM 9820 / NBRC 100138 / K1).